We begin with the raw amino-acid sequence, 89 residues long: UPF0335 protein Nham_1221 (89 aa).

The protein belongs to the UPF0335 family.

This Nitrobacter hamburgensis (strain DSM 10229 / NCIMB 13809 / X14) protein is UPF0335 protein Nham_1221.